The chain runs to 92 residues: MKTCEWCGELEAVPGRNTVYWELPDGTRAIELTDTPAMVCSSCGMTYQEENTVKEIEDQLLLIQTKKLPESLTYQQLMETERILKRNYFDFS.

This is an uncharacterized protein from Bacillus subtilis (strain 168).